Reading from the N-terminus, the 396-residue chain is Probable sugar efflux transporter (396 aa).

12 helical membrane-spanning segments follow: residues Val-15–Leu-35, Val-50–Leu-70, Leu-81–Phe-101, Val-103–Ala-123, Ala-136–Ile-156, Thr-169–Pro-189, Pro-209–Tyr-229, Phe-246–Gly-266, Ser-275–Ala-295, Leu-301–Val-321, Val-333–Gly-353, and Ala-364–Phe-384.

The protein belongs to the major facilitator superfamily. SotB (TC 2.A.1.2) family.

The protein localises to the cell inner membrane. Involved in the efflux of sugars. The physiological role may be the reduction of the intracellular concentration of toxic sugars or sugar metabolites. The protein is Probable sugar efflux transporter of Salmonella paratyphi C (strain RKS4594).